Here is a 308-residue protein sequence, read N- to C-terminus: Ornithine carbamoyltransferase (308 aa).

Carbamoyl phosphate contacts are provided by residues 56–59 (STRT), Gln-83, Arg-107, and 134–137 (HPCQ). L-ornithine-binding positions include Asn-165, Asp-225, and 229–230 (SM). Carbamoyl phosphate-binding positions include 266 to 267 (CL) and Arg-294.

Belongs to the aspartate/ornithine carbamoyltransferase superfamily. OTCase family.

It localises to the cytoplasm. It carries out the reaction carbamoyl phosphate + L-ornithine = L-citrulline + phosphate + H(+). It participates in amino-acid biosynthesis; L-arginine biosynthesis; L-arginine from L-ornithine and carbamoyl phosphate: step 1/3. Its function is as follows. Reversibly catalyzes the transfer of the carbamoyl group from carbamoyl phosphate (CP) to the N(epsilon) atom of ornithine (ORN) to produce L-citrulline. The protein is Ornithine carbamoyltransferase of Paracoccus denitrificans (strain Pd 1222).